The chain runs to 452 residues: Bifunctional protein GlmU (452 aa).

The segment at 1 to 226 (MSLHIIILAA…LHEVEGVNNR (226 aa)) is pyrophosphorylase. UDP-N-acetyl-alpha-D-glucosamine is bound by residues 8 to 11 (LAAG), lysine 22, glutamine 73, 78 to 79 (GT), 100 to 102 (YGD), glycine 136, glutamate 151, asparagine 166, and asparagine 224. Position 102 (aspartate 102) interacts with Mg(2+). Asparagine 224 contributes to the Mg(2+) binding site. Residues 227 to 247 (IQLAALERAYQQQVAEELMLA) form a linker region. An N-acetyltransferase region spans residues 248 to 452 (GATLRDPARV…IDGWTRPVKK (205 aa)). 2 residues coordinate UDP-N-acetyl-alpha-D-glucosamine: arginine 330 and lysine 348. The active-site Proton acceptor is the histidine 360. Tyrosine 363 and asparagine 374 together coordinate UDP-N-acetyl-alpha-D-glucosamine. Residues alanine 377, 383–384 (NY), serine 402, alanine 420, and arginine 437 each bind acetyl-CoA.

This sequence in the N-terminal section; belongs to the N-acetylglucosamine-1-phosphate uridyltransferase family. In the C-terminal section; belongs to the transferase hexapeptide repeat family. As to quaternary structure, homotrimer. It depends on Mg(2+) as a cofactor.

It is found in the cytoplasm. It carries out the reaction alpha-D-glucosamine 1-phosphate + acetyl-CoA = N-acetyl-alpha-D-glucosamine 1-phosphate + CoA + H(+). The catalysed reaction is N-acetyl-alpha-D-glucosamine 1-phosphate + UTP + H(+) = UDP-N-acetyl-alpha-D-glucosamine + diphosphate. It participates in nucleotide-sugar biosynthesis; UDP-N-acetyl-alpha-D-glucosamine biosynthesis; N-acetyl-alpha-D-glucosamine 1-phosphate from alpha-D-glucosamine 6-phosphate (route II): step 2/2. The protein operates within nucleotide-sugar biosynthesis; UDP-N-acetyl-alpha-D-glucosamine biosynthesis; UDP-N-acetyl-alpha-D-glucosamine from N-acetyl-alpha-D-glucosamine 1-phosphate: step 1/1. It functions in the pathway bacterial outer membrane biogenesis; LPS lipid A biosynthesis. Catalyzes the last two sequential reactions in the de novo biosynthetic pathway for UDP-N-acetylglucosamine (UDP-GlcNAc). The C-terminal domain catalyzes the transfer of acetyl group from acetyl coenzyme A to glucosamine-1-phosphate (GlcN-1-P) to produce N-acetylglucosamine-1-phosphate (GlcNAc-1-P), which is converted into UDP-GlcNAc by the transfer of uridine 5-monophosphate (from uridine 5-triphosphate), a reaction catalyzed by the N-terminal domain. The protein is Bifunctional protein GlmU of Hahella chejuensis (strain KCTC 2396).